A 312-amino-acid chain; its full sequence is Methionyl-tRNA formyltransferase (312 aa).

A (6S)-5,6,7,8-tetrahydrofolate-binding site is contributed by 109–112 (SLLP).

It belongs to the Fmt family.

It carries out the reaction L-methionyl-tRNA(fMet) + (6R)-10-formyltetrahydrofolate = N-formyl-L-methionyl-tRNA(fMet) + (6S)-5,6,7,8-tetrahydrofolate + H(+). Attaches a formyl group to the free amino group of methionyl-tRNA(fMet). The formyl group appears to play a dual role in the initiator identity of N-formylmethionyl-tRNA by promoting its recognition by IF2 and preventing the misappropriation of this tRNA by the elongation apparatus. The protein is Methionyl-tRNA formyltransferase of Listeria monocytogenes serotype 4b (strain CLIP80459).